The sequence spans 1451 residues: MVSKRSRLDFEDKETLAEDASKIMKQPLSKLAKKSCGSHEVEENGSVFVRLLKASGLTLKTGDNQNQLGVDQIIFQRKLFQALRKHPSYPKVIEEFVNGLESYTEDIDSLRNCLLSCERLQDEEASMGTFYSKSLIKLLLGIDILQPAIIKMLFEKVPQFLFESESRDGISMPRLIISQLKWLDRIVDSKDLTTQMMQLISVAPVNLQHDFITSLPEILGDSQHANVGKELSELLVQNTSLTVPILDVFSSLRLDPNFLSEIRQLVMGKLSSVRLEDLPVIVKFILHSVTDSTSLEVIAELREKLNVQHFTLPSRIQASQSKLKSKGLASSSGNQENSDKDCIVLLFDVIKSAIRYEKTISEAWIKAIERIQSAAEHKALDVAMLLIIYGTSTQTKKGVERLLRNKIQSDCIQEQLLDSTFSTHCLVLKDICPSILLLAQTLFHSQDQRIILFGSLLCKYAFKFFDTYCQQEVVGALVTHVCSGNEAEVDAALDVLLELIVLNASAMRLNAAFIKGILDYLENMSPQQIRKIFCILSTLAFSQQPGTSNHIQDDMHLVIRKQLSSTVFKYKLIGIIGAVTMAGIMAEDRTMPSNSTQRSASVSSEQHTQVTSLLQLVHSCTEHSPWASSLYYDEFANLIQERKLAPKTLEWVAQTIFNDFQDAFVVDFCAVPEGDFPFPVKALYGLEECNTQDGIVINLLPLFFQEFAKDVSQVTSQESSQKSMSPLCLASHFRLLRLCVARQHNGNLDEIDALLDCPLFLPDLEPGEKLESMSAKDRSLMCSLTFLTFNWFREVVNAFCQQTSPEMKGKVLSRLKDLVELQEILEKYLAVIPDYVPPFTSVDLDTLDVIPRSNSAVAAKSRHKGKTGGKKQKADSSTASCTDTLLTEDTSECDVAPSGKSQVDKESTGKEGKTFVSLQNYRAFFRELDIEVFSILHSGLVTKFILDTEMHTEATEVVQLGPAELLFLLEDLSQKLENRLTPSFTKRVCFFKNKGSRNIGFSHLHQRSVQDIVHCVVQLLTPMCNHLENIHNFFQCLGAENLSVNDKARVTAQEHYTMSSCYQKLLQVFHALLAWKGFTHQSNHRLLRSALEVLASRLKQTEEGQPLEELLSQSFSYLQNLQHSIPSFQCGLYLLRLLMALLEKSAVPTQKKEKLASLAKQLLCRAWPHGDKEKNPTFNDHLHDLLCIYLEHTDNVLKAIEEITGVGVPELVNAPKDASSSTFPTLTRHTFVIFFRVMMAELEKTVKGLQAGTATDSQQVHEEKLLYWNMAVRDFSILINLMKVFDSYPVLHVCLKYGRRFVEAFLKQCMPLLDFSFRKHRDDVLSLLQTLQLNTRLLHHLCGHSKIHQDTRLTKHVPLLKKSLELLVCRVKAMLVLNNCREAFWLGTLKNRDLQGEEIISQHPSSPENTSEDSEDGMTSYVSRNRAIEDGEDEANDGQDRDSDESDDSSS.

The interval 1–291 is interaction with FANCE; sequence MVSKRSRLDF…VKFILHSVTD (291 aa). Phosphoserine is present on serine 222. An interaction with BRCA2 region spans residues 248-359; it reads VFSSLRLDPN…IKSAIRYEKT (112 aa). A Glycyl lysine isopeptide (Lys-Gly) (interchain with G-Cter in ubiquitin) cross-link involves residue lysine 561. Position 716 is a phosphoserine (serine 716). Residues 858-879 form a disordered region; sequence AAKSRHKGKTGGKKQKADSSTA. The segment covering 860-871 has biased composition (basic residues); that stretch reads KSRHKGKTGGKK. Phosphoserine is present on residues serine 1257, serine 1406, and serine 1414. The segment at 1399–1451 is disordered; sequence IISQHPSSPENTSEDSEDGMTSYVSRNRAIEDGEDEANDGQDRDSDESDDSSS. The segment covering 1430–1451 has biased composition (acidic residues); the sequence is DGEDEANDGQDRDSDESDDSSS.

The protein belongs to the Fanconi anemia protein FANCD2 family. As to quaternary structure, homodimer; cannot be ubiquitinated and does not bind DNA. Part of a FANCI-FANCD2 heterodimeric complex that binds and scans dsDNA for DNA damage. Interacts directly with FANCE and FANCI. Interacts with USP1 and MEN1. The ubiquitinated form specifically interacts with BRCA1 and BLM. Both the nonubiquitinated and the monoubiquitinated forms interact with BRCA2; this interaction is mediated by phosphorylated FANCG and the complex also includes XCCR3. The ubiquitinated form specifically interacts with MTMR15/FAN1 (via UBZ-type zinc finger), leading to recruit MTMR15/FAN1 to sites of DNA damage. Interacts with DCLRE1B/Apollo. Interacts with POLN. Interacts with UHRF1 and UHRF2; these interactions promote FANCD2 activation. Post-translationally, monoubiquitinated on Lys-561 during S phase and upon genotoxic stress by FANCL in complex with E2 ligases UBE2T or UBE2W. Deubiquitinated by USP1 as cells enter G2/M, or once DNA repair is completed. Monoubiquitination requires the joint intervention of the FANC core complex, including FANCA, FANCB, FANCC, FANCE, FANCF, FANCG, and FANCM, and proteins involved in cell cycle checkpoints and DNA repair, including RPA1, ATR, CHEK1 and BRCA1, and is mediated by FANCL/PHF9. Monoubiquitination prevents DNA release from the FANCI-FANCD2 complex. FANCD2 is only ubiquitinated in the FANCI-FANCD2 complex and the monoubiquitination of FANCD2 is promoted by phosphorylation of FANCI. Ubiquitination is required for binding to chromatin, interaction with BRCA1, BRCA2 and MTMR15/FAN1, DNA repair, and normal cell cycle progression. Phosphorylated on several sites including Ser-222 and Ser-1401 in response to genotoxic stress by ATM and/or ATR.

It is found in the nucleus. Functionally, required for maintenance of chromosomal stability. Promotes accurate and efficient pairing of homologs during meiosis. Involved in the repair of DNA double-strand breaks, both by homologous recombination and single-strand annealing. The FANCI-FANCD2 complex binds and scans double-stranded DNA (dsDNA) for DNA damage; this complex stalls at DNA junctions between double-stranded DNA and single-stranded DNA. May participate in S phase and G2 phase checkpoint activation upon DNA damage. Plays a role in preventing breakage and loss of missegregating chromatin at the end of cell division, particularly after replication stress. Promotes BRCA2/FANCD1 loading onto damaged chromatin. May also be involved in B-cell immunoglobulin isotype switching. The sequence is that of Fanconi anemia group D2 protein homolog (Fancd2) from Rattus norvegicus (Rat).